Here is a 157-residue protein sequence, read N- to C-terminus: MKKKANRLDAIKMIISSKEVGSQEELLQELGQEGFELTQATLSRDLKQLKVAKAASMNGRYVYVLPNDIMYKRVGDQSASEMLMNNGFISLQFSGNIAVIKTRPGYASSMAYDIDNRESDTILGTIAGDDTIMLVLREGATPTAVRHFLSLIIPNIN.

Belongs to the ArgR family.

The protein localises to the cytoplasm. It participates in amino-acid biosynthesis; L-arginine biosynthesis [regulation]. Functionally, regulates arginine biosynthesis genes. This is Arginine repressor from Bacteroides fragilis (strain ATCC 25285 / DSM 2151 / CCUG 4856 / JCM 11019 / LMG 10263 / NCTC 9343 / Onslow / VPI 2553 / EN-2).